Consider the following 177-residue polypeptide: Large ribosomal subunit protein uL6 (177 aa).

Belongs to the universal ribosomal protein uL6 family. Part of the 50S ribosomal subunit.

This protein binds to the 23S rRNA, and is important in its secondary structure. It is located near the subunit interface in the base of the L7/L12 stalk, and near the tRNA binding site of the peptidyltransferase center. The chain is Large ribosomal subunit protein uL6 from Cupriavidus necator (strain ATCC 17699 / DSM 428 / KCTC 22496 / NCIMB 10442 / H16 / Stanier 337) (Ralstonia eutropha).